The primary structure comprises 246 residues: Octanoyltransferase (246 aa).

The BPL/LPL catalytic domain occupies 54 to 240 (DPPPEAVWLL…CLEPNADAAI (187 aa)). Residues 96 to 103 (RGGEVTHH), 163 to 165 (AIG), and 176 to 178 (GVA) each bind substrate. Cysteine 194 acts as the Acyl-thioester intermediate in catalysis.

This sequence belongs to the LipB family.

The protein localises to the cytoplasm. The catalysed reaction is octanoyl-[ACP] + L-lysyl-[protein] = N(6)-octanoyl-L-lysyl-[protein] + holo-[ACP] + H(+). The protein operates within protein modification; protein lipoylation via endogenous pathway; protein N(6)-(lipoyl)lysine from octanoyl-[acyl-carrier-protein]: step 1/2. Functionally, catalyzes the transfer of endogenously produced octanoic acid from octanoyl-acyl-carrier-protein onto the lipoyl domains of lipoate-dependent enzymes. Lipoyl-ACP can also act as a substrate although octanoyl-ACP is likely to be the physiological substrate. The chain is Octanoyltransferase from Synechococcus sp. (strain WH7803).